Here is a 683-residue protein sequence, read N- to C-terminus: uncharacterized protein (683 aa).

Polar residues-rich tracts occupy residues 407–420 and 512–529; these read FETS…TYTP and EGSS…SSEA. Disordered stretches follow at residues 407-427, 509-556, and 621-648; these read FETS…KLST, FSRE…SSTV, and HNTS…DHPD. A compositionally biased stretch (low complexity) spans 531 to 542; it reads LPPLLTTTPTPT. Composition is skewed to polar residues over residues 543 to 556 and 621 to 630; these read NTEK…SSTV and HNTSMPNPHH. Basic and acidic residues predominate over residues 633–648; sequence VKPEDHPHHPEGDHPD. A helical transmembrane segment spans residues 657–677; it reads IWLLPIAGTIFALVALVIVNI.

It localises to the host membrane. This is an uncharacterized protein from Alcelaphine herpesvirus 1 (strain C500) (AlHV-1).